The primary structure comprises 287 residues: Acetyl-coenzyme A carboxylase carboxyl transferase subunit beta (287 aa).

A CoA carboxyltransferase N-terminal domain is found at 25–287 (IWTKCSGCVQ…KLTQQSFSEK (263 aa)). Positions 29, 32, 48, and 51 each coordinate Zn(2+). A C4-type zinc finger spans residues 29–51 (CSGCVQLLYTKELERNLQVCPKC).

The protein belongs to the AccD/PCCB family. In terms of assembly, acetyl-CoA carboxylase is a heterohexamer composed of biotin carboxyl carrier protein (AccB), biotin carboxylase (AccC) and two subunits each of ACCase subunit alpha (AccA) and ACCase subunit beta (AccD). Zn(2+) is required as a cofactor.

It localises to the cytoplasm. The catalysed reaction is N(6)-carboxybiotinyl-L-lysyl-[protein] + acetyl-CoA = N(6)-biotinyl-L-lysyl-[protein] + malonyl-CoA. The protein operates within lipid metabolism; malonyl-CoA biosynthesis; malonyl-CoA from acetyl-CoA: step 1/1. Functionally, component of the acetyl coenzyme A carboxylase (ACC) complex. Biotin carboxylase (BC) catalyzes the carboxylation of biotin on its carrier protein (BCCP) and then the CO(2) group is transferred by the transcarboxylase to acetyl-CoA to form malonyl-CoA. This chain is Acetyl-coenzyme A carboxylase carboxyl transferase subunit beta, found in Blochmanniella floridana.